Reading from the N-terminus, the 409-residue chain is Elongation factor Tu, chloroplastic (409 aa).

Residues 10–214 (KPHVNIGTIG…AVDTYIPTPE (205 aa)) enclose the tr-type G domain. Residues 19–26 (GHVDHGKT) form a G1 region. 19-26 (GHVDHGKT) contributes to the GTP binding site. Threonine 26 serves as a coordination point for Mg(2+). The G2 stretch occupies residues 60-64 (GITIN). The G3 stretch occupies residues 81–84 (DCPG). Residues 81 to 85 (DCPGH) and 136 to 139 (NKED) contribute to the GTP site. The G4 stretch occupies residues 136–139 (NKED). Residues 174–176 (SAL) are G5.

This sequence belongs to the TRAFAC class translation factor GTPase superfamily. Classic translation factor GTPase family. EF-Tu/EF-1A subfamily.

The protein localises to the plastid. Its subcellular location is the chloroplast. The catalysed reaction is GTP + H2O = GDP + phosphate + H(+). GTP hydrolase that promotes the GTP-dependent binding of aminoacyl-tRNA to the A-site of ribosomes during protein biosynthesis. The sequence is that of Elongation factor Tu, chloroplastic (tufA) from Porphyra purpurea (Red seaweed).